The sequence spans 208 residues: Small ribosomal subunit protein uS4 (208 aa).

In terms of domain architecture, S4 RNA-binding spans 98–161 (RRLDNVVYRL…RKSKRFKEVF (64 aa)).

It belongs to the universal ribosomal protein uS4 family. Part of the 30S ribosomal subunit. Contacts protein S5. The interaction surface between S4 and S5 is involved in control of translational fidelity.

Functionally, one of the primary rRNA binding proteins, it binds directly to 16S rRNA where it nucleates assembly of the body of the 30S subunit. With S5 and S12 plays an important role in translational accuracy. This chain is Small ribosomal subunit protein uS4, found in Halothermothrix orenii (strain H 168 / OCM 544 / DSM 9562).